Here is a 153-residue protein sequence, read N- to C-terminus: Myoglobin (153 aa).

Residues 1–147 form the Globin domain; it reads MATACVKSLE…FSDECLDHLK (147 aa). Histidine 94 provides a ligand contact to heme b.

It belongs to the globin family. As to quaternary structure, homodimer; disulfide-linked. In terms of processing, the N-terminus is blocked. As to expression, body wall globin is localized in cellular compartments belonging to the hypodermis, the dorsal, ventral and lateral cords, the nerve ring, and body wall muscle.

Its subcellular location is the cytoplasm. Its function is as follows. High oxygen affinity. Probably supplies oxygen needed for muscle activity. This Ascaris suum (Pig roundworm) protein is Myoglobin.